A 250-amino-acid chain; its full sequence is Small ribosomal subunit protein uS3 (250 aa).

Residues 39-107 enclose the KH type-2 domain; that stretch reads VREFLTKKLK…PAQVSINEID (69 aa). The tract at residues 214 to 250 is disordered; the sequence is VMNPAPQEERPAKRGRGRGEGQERRGRRSDRAADKGE. Residues 220 to 250 show a composition bias toward basic and acidic residues; that stretch reads QEERPAKRGRGRGEGQERRGRRSDRAADKGE.

It belongs to the universal ribosomal protein uS3 family. In terms of assembly, part of the 30S ribosomal subunit. Forms a tight complex with proteins S10 and S14.

In terms of biological role, binds the lower part of the 30S subunit head. Binds mRNA in the 70S ribosome, positioning it for translation. This is Small ribosomal subunit protein uS3 from Acinetobacter baylyi (strain ATCC 33305 / BD413 / ADP1).